We begin with the raw amino-acid sequence, 367 residues long: Succinyl-diaminopimelate desuccinylase (367 aa).

H67 is a Zn(2+) binding site. D69 is a catalytic residue. D98 serves as a coordination point for Zn(2+). E128 acts as the Proton acceptor in catalysis. Zn(2+)-binding residues include E129, E157, and H342.

The protein belongs to the peptidase M20A family. DapE subfamily. Homodimer. Zn(2+) serves as cofactor. The cofactor is Co(2+).

It carries out the reaction N-succinyl-(2S,6S)-2,6-diaminopimelate + H2O = (2S,6S)-2,6-diaminopimelate + succinate. Its pathway is amino-acid biosynthesis; L-lysine biosynthesis via DAP pathway; LL-2,6-diaminopimelate from (S)-tetrahydrodipicolinate (succinylase route): step 3/3. Catalyzes the hydrolysis of N-succinyl-L,L-diaminopimelic acid (SDAP), forming succinate and LL-2,6-diaminopimelate (DAP), an intermediate involved in the bacterial biosynthesis of lysine and meso-diaminopimelic acid, an essential component of bacterial cell walls. The protein is Succinyl-diaminopimelate desuccinylase of Campylobacter hominis (strain ATCC BAA-381 / DSM 21671 / CCUG 45161 / LMG 19568 / NCTC 13146 / CH001A).